The primary structure comprises 211 residues: Pyridoxine/pyridoxamine 5'-phosphate oxidase (211 aa).

Residues 8-11 (RKNY) and K66 each bind substrate. FMN contacts are provided by residues 61-66 (RIVLLK), 76-77 (FT), K83, and Q105. The substrate site is built by Y123, R127, and S131. FMN contacts are provided by residues 140-141 (QS) and W184. 190 to 192 (RLH) serves as a coordination point for substrate. R194 serves as a coordination point for FMN.

This sequence belongs to the pyridoxamine 5'-phosphate oxidase family. Homodimer. FMN is required as a cofactor.

It carries out the reaction pyridoxamine 5'-phosphate + O2 + H2O = pyridoxal 5'-phosphate + H2O2 + NH4(+). The enzyme catalyses pyridoxine 5'-phosphate + O2 = pyridoxal 5'-phosphate + H2O2. It participates in cofactor metabolism; pyridoxal 5'-phosphate salvage; pyridoxal 5'-phosphate from pyridoxamine 5'-phosphate: step 1/1. Its pathway is cofactor metabolism; pyridoxal 5'-phosphate salvage; pyridoxal 5'-phosphate from pyridoxine 5'-phosphate: step 1/1. Its function is as follows. Catalyzes the oxidation of either pyridoxine 5'-phosphate (PNP) or pyridoxamine 5'-phosphate (PMP) into pyridoxal 5'-phosphate (PLP). This is Pyridoxine/pyridoxamine 5'-phosphate oxidase from Polynucleobacter asymbioticus (strain DSM 18221 / CIP 109841 / QLW-P1DMWA-1) (Polynucleobacter necessarius subsp. asymbioticus).